Here is a 326-residue protein sequence, read N- to C-terminus: Probable cell division protein WhiA (326 aa).

A DNA-binding region (H-T-H motif) is located at residues 275-308 (SLDELGRLADPPMTKDAIAGRIRRLLAMADKRAS).

This sequence belongs to the WhiA family.

In terms of biological role, involved in cell division and chromosome segregation. In Renibacterium salmoninarum (strain ATCC 33209 / DSM 20767 / JCM 11484 / NBRC 15589 / NCIMB 2235), this protein is Probable cell division protein WhiA.